We begin with the raw amino-acid sequence, 232 residues long: Ubiquinone biosynthesis O-methyltransferase (232 aa).

Residues Arg-36, Gly-55, Asp-76, and Leu-120 each coordinate S-adenosyl-L-methionine.

Belongs to the methyltransferase superfamily. UbiG/COQ3 family.

The catalysed reaction is a 3-demethylubiquinol + S-adenosyl-L-methionine = a ubiquinol + S-adenosyl-L-homocysteine + H(+). The enzyme catalyses a 3-(all-trans-polyprenyl)benzene-1,2-diol + S-adenosyl-L-methionine = a 2-methoxy-6-(all-trans-polyprenyl)phenol + S-adenosyl-L-homocysteine + H(+). Its pathway is cofactor biosynthesis; ubiquinone biosynthesis. Functionally, O-methyltransferase that catalyzes the 2 O-methylation steps in the ubiquinone biosynthetic pathway. This is Ubiquinone biosynthesis O-methyltransferase from Dechloromonas aromatica (strain RCB).